A 150-amino-acid polypeptide reads, in one-letter code: Lymphocyte antigen 6 complex locus protein G5c (150 aa).

A signal peptide spans 1–41 (MRFMAGPAGSQSLGPLCFHSSPQALYTVLLIVLVMMSLVFG). Residues 60 to 150 (LRCYRCLLET…DPQNRGLYTP (91 aa)) enclose the UPAR/Ly6 domain. 4 cysteine pairs are disulfide-bonded: Cys62–Cys89, Cys65–Cys74, Cys81–Cys107, and Cys134–Cys139. The N-linked (GlcNAc...) asparagine glycan is linked to Asn96.

As to quaternary structure, forms oligomers. In terms of processing, N-glycosylated. As to expression, detected in T-cell lines and fetal and adult lung.

The protein resides in the secreted. In terms of biological role, may have a role in hematopoietic cell differentiation. In Homo sapiens (Human), this protein is Lymphocyte antigen 6 complex locus protein G5c (LY6G5C).